Consider the following 239-residue polypeptide: Phosphoribosylaminoimidazole-succinocarboxamide synthase (239 aa).

This sequence belongs to the SAICAR synthetase family.

It catalyses the reaction 5-amino-1-(5-phospho-D-ribosyl)imidazole-4-carboxylate + L-aspartate + ATP = (2S)-2-[5-amino-1-(5-phospho-beta-D-ribosyl)imidazole-4-carboxamido]succinate + ADP + phosphate + 2 H(+). It functions in the pathway purine metabolism; IMP biosynthesis via de novo pathway; 5-amino-1-(5-phospho-D-ribosyl)imidazole-4-carboxamide from 5-amino-1-(5-phospho-D-ribosyl)imidazole-4-carboxylate: step 1/2. The protein is Phosphoribosylaminoimidazole-succinocarboxamide synthase of Dichelobacter nodosus (strain VCS1703A).